Reading from the N-terminus, the 359-residue chain is GTP 3',8-cyclase (359 aa).

The 228-residue stretch at 33 to 260 folds into the Radical SAM core domain; it reads RFGRRHDSLR…PTGRENPSAP (228 aa). A GTP-binding site is contributed by Arg42. [4Fe-4S] cluster contacts are provided by Cys49 and Cys53. Tyr55 is a binding site for S-adenosyl-L-methionine. Position 56 (Cys56) interacts with [4Fe-4S] cluster. Residue Arg93 participates in GTP binding. Residue Gly97 participates in S-adenosyl-L-methionine binding. Thr124 contacts GTP. S-adenosyl-L-methionine is bound at residue Ser148. Residue Lys185 participates in GTP binding. Met219 is an S-adenosyl-L-methionine binding site. Residues Cys286 and Cys289 each coordinate [4Fe-4S] cluster. 291-293 is a GTP binding site; the sequence is RLR. Cys303 contributes to the [4Fe-4S] cluster binding site.

This sequence belongs to the radical SAM superfamily. MoaA family. Monomer and homodimer. It depends on [4Fe-4S] cluster as a cofactor.

The enzyme catalyses GTP + AH2 + S-adenosyl-L-methionine = (8S)-3',8-cyclo-7,8-dihydroguanosine 5'-triphosphate + 5'-deoxyadenosine + L-methionine + A + H(+). Its pathway is cofactor biosynthesis; molybdopterin biosynthesis. Functionally, catalyzes the cyclization of GTP to (8S)-3',8-cyclo-7,8-dihydroguanosine 5'-triphosphate. This chain is GTP 3',8-cyclase, found in Rhodopirellula baltica (strain DSM 10527 / NCIMB 13988 / SH1).